The chain runs to 321 residues: UDP-3-O-acylglucosamine N-acyltransferase (321 aa).

His231 (proton acceptor) is an active-site residue.

The protein belongs to the transferase hexapeptide repeat family. LpxD subfamily. As to quaternary structure, homotrimer.

It catalyses the reaction a UDP-3-O-[(3R)-3-hydroxyacyl]-alpha-D-glucosamine + a (3R)-hydroxyacyl-[ACP] = a UDP-2-N,3-O-bis[(3R)-3-hydroxyacyl]-alpha-D-glucosamine + holo-[ACP] + H(+). The protein operates within bacterial outer membrane biogenesis; LPS lipid A biosynthesis. Catalyzes the N-acylation of UDP-3-O-acylglucosamine using 3-hydroxyacyl-ACP as the acyl donor. Is involved in the biosynthesis of lipid A, a phosphorylated glycolipid that anchors the lipopolysaccharide to the outer membrane of the cell. In Campylobacter jejuni subsp. jejuni serotype O:2 (strain ATCC 700819 / NCTC 11168), this protein is UDP-3-O-acylglucosamine N-acyltransferase.